The primary structure comprises 404 residues: Alanyl-tRNA editing protein AlaX-L (404 aa).

Residues His104, His108, Cys202, and His206 each contribute to the Zn(2+) site.

This sequence belongs to the class-II aminoacyl-tRNA synthetase family. Editing domain AlaX-L subfamily. Requires Zn(2+) as cofactor.

It is found in the cytoplasm. Its function is as follows. Functions in trans to edit the amino acid moiety from mischarged charged tRNA(Ala). This Pyrococcus horikoshii (strain ATCC 700860 / DSM 12428 / JCM 9974 / NBRC 100139 / OT-3) protein is Alanyl-tRNA editing protein AlaX-L (alaXL).